Consider the following 633-residue polypeptide: MRLLSLAGAMALPLCVLAHPTHRTRGIARRGIDLTPYRLPGNAEYTSSRTSAMRSLLFERADGEDYVETAKKVLQSVHPDATFRVIDDHYVGDNGVAHVHLLQTAHGIDIDNANFNVNIDKNGKVLSYGNSFFSGKIPDSDPLTKRSFSDPVEALKAAATGLGIPLTADDVTSEGLDGTTSYTFKGTKGALSDPTADLVYLAKPDNTLALTWRVETDMNSNWLLTYVDAETAETIHGVVDYISDATYQVYPWGLNDPTEGSRQILEDPWDSKASEFTWIGDGKAKYKTTRGNNGIAQSNPDGGDDYLNNHRPESSSLKFVYPYSPNATSPSSYIDASITQLFYTANTYHDLLYTLGFNEKAGNFEANNNGAGGKGNDFVILNAQDGSGTNNAMFGSPPDGRPGRMYMFIWTESNPPRDGSMEAGIVIHEYTHGLSSRLTGGPANARCVDGEESGGMGEGWGDFMATAVRLKSGDTRQTDYTMGAWAANDPKGIRDYPYSTSMTKNPLTYAHLNNVTEVHEGGTIWASMLYEVMWNLIDKHGKNDAPKPDLKDGVPTDGKYLSMKLVMDGMALQPCNPSFIQARDAILDADVALTKSGNQCEIWKGFAKRGLGERAALKNGIRVDSFDVPKGVC.

The N-terminal stretch at 1–18 (MRLLSLAGAMALPLCVLA) is a signal peptide. Residues 19 to 244 (HPTHRTRGIA…IHGVVDYISD (226 aa)) constitute a propeptide that is removed on maturation. N326 is a glycosylation site (N-linked (GlcNAc...) asparagine). H428 provides a ligand contact to Zn(2+). The active site involves E429. Position 432 (H432) interacts with Zn(2+). An N-linked (GlcNAc...) asparagine glycan is attached at N514.

Belongs to the peptidase M36 family. Zn(2+) is required as a cofactor.

The protein resides in the secreted. Secreted metalloproteinase that allows assimilation of proteinaceous substrates. This chain is Extracellular metalloproteinase mep (mep), found in Aspergillus terreus (strain NIH 2624 / FGSC A1156).